We begin with the raw amino-acid sequence, 251 residues long: Carbohydrate deacetylase (251 aa).

Residues histidine 59 and histidine 122 each coordinate Mg(2+).

Belongs to the YdjC deacetylase family. As to quaternary structure, homodimer. The cofactor is Mg(2+).

Probably catalyzes the deacetylation of acetylated carbohydrates an important step in the degradation of oligosaccharides. The chain is Carbohydrate deacetylase from Vibrio campbellii (strain ATCC BAA-1116).